The following is a 267-amino-acid chain: Small ribosomal subunit protein uS2c (267 aa).

Positions 237 to 267 (KQKIKKTGVKISGNRRTSSITKKRNPASSKI) are disordered. The segment covering 250 to 267 (NRRTSSITKKRNPASSKI) has biased composition (polar residues).

Belongs to the universal ribosomal protein uS2 family.

It localises to the plastid. The protein localises to the chloroplast. This chain is Small ribosomal subunit protein uS2c (rps2), found in Chlorella vulgaris (Green alga).